Reading from the N-terminus, the 433-residue chain is Polygalacturonase ADPG2 (433 aa).

The first 24 residues, 1-24 (MARCTNLVTVFLLWALLMFSWCKA), serve as a signal peptide directing secretion. PbH1 repeat units follow at residues 223-249 (CSNVQVSNVVVTAPADSPNTDGIHITN), 250-271 (TQNIRVSESIIGTGDDCISIES), 273-293 (SQNVQINDITCGPGHGISIGS), 303-324 (VSGVTVDGAKLSGTDNGVRIKT), and 332-353 (ASNIIFQNIQMDNVKNPIIIDQ). Residue D264 is the Proton donor of the active site. H287 is an active-site residue.

It belongs to the glycosyl hydrolase 28 family. Expressed in roots and in the abscission zone of the sepals, petals and stamens of flowers, at the base of cauline leaves and in the basal cell of trichomes from senescing leaves. Found at the site of lateral root emergence, in the dehiscence zone of anthers and maturing siliques. Also expressed early in anther development, at the time of microspore separation. Expressed in germinating seeds, at the point at which the radicle broke through the seed coat. Not expressed at the junction between the seed and the funiculus or in the dehiscence zone of anthers or pods.

It is found in the secreted. The protein localises to the cell wall. It carries out the reaction (1,4-alpha-D-galacturonosyl)n+m + H2O = (1,4-alpha-D-galacturonosyl)n + (1,4-alpha-D-galacturonosyl)m.. Polygalacturonase involved in cell separation in the final stages of pod shatter, in anther dehiscence and in floral organ abscission. In Arabidopsis thaliana (Mouse-ear cress), this protein is Polygalacturonase ADPG2 (ADPG2).